The following is a 444-amino-acid chain: Phosphoglucosamine mutase (444 aa).

Serine 102 serves as the catalytic Phosphoserine intermediate. Positions 102, 241, 243, and 245 each coordinate Mg(2+). Serine 102 bears the Phosphoserine mark.

It belongs to the phosphohexose mutase family. Mg(2+) is required as a cofactor. Activated by phosphorylation.

The enzyme catalyses alpha-D-glucosamine 1-phosphate = D-glucosamine 6-phosphate. Its function is as follows. Catalyzes the conversion of glucosamine-6-phosphate to glucosamine-1-phosphate. The polypeptide is Phosphoglucosamine mutase (Acidovorax ebreus (strain TPSY) (Diaphorobacter sp. (strain TPSY))).